Reading from the N-terminus, the 420-residue chain is Gamma-glutamyl phosphate reductase (420 aa).

The protein belongs to the gamma-glutamyl phosphate reductase family.

It is found in the cytoplasm. It carries out the reaction L-glutamate 5-semialdehyde + phosphate + NADP(+) = L-glutamyl 5-phosphate + NADPH + H(+). The protein operates within amino-acid biosynthesis; L-proline biosynthesis; L-glutamate 5-semialdehyde from L-glutamate: step 2/2. Catalyzes the NADPH-dependent reduction of L-glutamate 5-phosphate into L-glutamate 5-semialdehyde and phosphate. The product spontaneously undergoes cyclization to form 1-pyrroline-5-carboxylate. The polypeptide is Gamma-glutamyl phosphate reductase (Neisseria meningitidis serogroup B (strain ATCC BAA-335 / MC58)).